Here is a 387-residue protein sequence, read N- to C-terminus: Gamma-butyrobetaine dioxygenase (387 aa).

4 residues coordinate Zn(2+): Cys38, Cys40, Cys43, and His82. The Fe cation site is built by His202, Asp204, and His347. Ser351 carries the post-translational modification Phosphoserine.

Belongs to the gamma-BBH/TMLD family. It depends on Fe(2+) as a cofactor. The cofactor is L-ascorbate.

It is found in the cytoplasm. The enzyme catalyses 4-(trimethylamino)butanoate + 2-oxoglutarate + O2 = carnitine + succinate + CO2. It participates in amine and polyamine biosynthesis; carnitine biosynthesis. Catalyzes the formation of L-carnitine from gamma-butyrobetaine. In Pongo abelii (Sumatran orangutan), this protein is Gamma-butyrobetaine dioxygenase (BBOX1).